The primary structure comprises 474 residues: Gasdermin-C (474 aa).

The triggers pyroptosis stretch occupies residues 1-237 (MLYTFDQVSK…TCAILLSANA (237 aa)).

The protein belongs to the gasdermin family. In terms of assembly, homooligomer; homooligomeric ring-shaped pore complex containing 27-28 subunits when inserted in the membrane. Cleavage by CASP8 relieves autoinhibition by releasing the N-terminal moiety (Gasdermin-C, N-terminal) that initiates pyroptosis. In terms of processing, palmitoylated.

The protein resides in the cytoplasm. It is found in the cytosol. The protein localises to the cell membrane. Its activity is regulated as follows. The full-length protein before cleavage is inactive: intramolecular interactions between N- and C-terminal domains mediate autoinhibition in the absence of activation signal. The intrinsic pyroptosis-inducing activity is carried by the released N-terminal moiety (Gasdermin-C, N-terminal) following cleavage by caspase CASP8. Functionally, this form constitutes the precursor of the pore-forming protein: upon cleavage, the released N-terminal moiety (Gasdermin-C, N-terminal) binds to membranes and forms pores, triggering pyroptosis. In terms of biological role, pore-forming protein that causes membrane permeabilization and pyroptosis. Produced by the cleavage of gasdermin-C by caspase CASP8 in response to death signals. After cleavage, moves to the plasma membrane where it strongly binds to membrane inner leaflet lipids. Homooligomerizes within the membrane and forms pores of 10-15 nanometers (nm) of inner diameter, triggering pyroptosis. This Rattus norvegicus (Rat) protein is Gasdermin-C.